The following is a 263-amino-acid chain: Proteasome subunit alpha type-1 (263 aa).

Position 1 is an N-acetylmethionine (Met-1). Ser-110 carries the post-translational modification Phosphoserine; alternate. An O-linked (GlcNAc) serine; alternate glycan is attached at Ser-110. A Glycyl lysine isopeptide (Lys-Gly) (interchain with G-Cter in ubiquitin) cross-link involves residue Lys-115. Ser-177 carries the phosphoserine modification. Residue Lys-208 forms a Glycyl lysine isopeptide (Lys-Gly) (interchain with G-Cter in ubiquitin) linkage. The disordered stretch occupies residues 232-263; the sequence is FLEGLEERPQRKAQPAQPADEPAEKADEPMEH. Over residues 253–263 the composition is skewed to basic and acidic residues; sequence PAEKADEPMEH.

This sequence belongs to the peptidase T1A family. The 26S proteasome consists of a 20S proteasome core and two 19S regulatory subunits. The 20S proteasome core is a barrel-shaped complex made of 28 subunits that are arranged in four stacked rings. The two outer rings are each formed by seven alpha subunits, and the two inner rings are formed by seven beta subunits. The proteolytic activity is exerted by three beta-subunits PSMB5, PSMB6 and PSMB7. Interacts with NOTCH3. Interacts with ZFAND1.

Its subcellular location is the cytoplasm. It is found in the nucleus. In terms of biological role, component of the 20S core proteasome complex involved in the proteolytic degradation of most intracellular proteins. This complex plays numerous essential roles within the cell by associating with different regulatory particles. Associated with two 19S regulatory particles, forms the 26S proteasome and thus participates in the ATP-dependent degradation of ubiquitinated proteins. The 26S proteasome plays a key role in the maintenance of protein homeostasis by removing misfolded or damaged proteins that could impair cellular functions, and by removing proteins whose functions are no longer required. Associated with the PA200 or PA28, the 20S proteasome mediates ubiquitin-independent protein degradation. This type of proteolysis is required in several pathways including spermatogenesis (20S-PA200 complex) or generation of a subset of MHC class I-presented antigenic peptides (20S-PA28 complex). The polypeptide is Proteasome subunit alpha type-1 (Homo sapiens (Human)).